Here is a 61-residue protein sequence, read N- to C-terminus: Small ribosomal subunit protein uS14 (61 aa).

Zn(2+) is bound by residues Cys-24, Cys-27, Cys-40, and Cys-43.

It belongs to the universal ribosomal protein uS14 family. Zinc-binding uS14 subfamily. As to quaternary structure, part of the 30S ribosomal subunit. Contacts proteins S3 and S10. Zn(2+) serves as cofactor.

Functionally, binds 16S rRNA, required for the assembly of 30S particles and may also be responsible for determining the conformation of the 16S rRNA at the A site. This Streptococcus pyogenes serotype M49 (strain NZ131) protein is Small ribosomal subunit protein uS14.